A 426-amino-acid chain; its full sequence is D-tagatose-1,6-bisphosphate aldolase subunit KbaZ (426 aa).

This sequence belongs to the GatZ/KbaZ family. KbaZ subfamily. In terms of assembly, forms a complex with KbaY.

It functions in the pathway carbohydrate metabolism; D-tagatose 6-phosphate degradation; D-glyceraldehyde 3-phosphate and glycerone phosphate from D-tagatose 6-phosphate: step 2/2. Its function is as follows. Component of the tagatose-1,6-bisphosphate aldolase KbaYZ that is required for full activity and stability of the Y subunit. Could have a chaperone-like function for the proper and stable folding of KbaY. When expressed alone, KbaZ does not show any aldolase activity. The sequence is that of D-tagatose-1,6-bisphosphate aldolase subunit KbaZ from Escherichia coli (strain K12 / MC4100 / BW2952).